The following is a 157-amino-acid chain: Rieske domain-containing protein (157 aa).

Met1 carries the N-acetylmethionine modification. Position 6 is a phosphoserine (Ser6). Rieske domains are found at residues 16 to 127 (TSVC…VDNG) and 17 to 131 (SVCV…NIYV). Cys57, His59, Cys80, and His83 together coordinate [2Fe-2S] cluster.

[2Fe-2S] cluster is required as a cofactor.

In Mus musculus (Mouse), this protein is Rieske domain-containing protein (Rfesd).